Consider the following 294-residue polypeptide: Cytidine deaminase (294 aa).

CMP/dCMP-type deaminase domains follow at residues 48–168 (NDDE…FGPK) and 187–294 (DNTS…RVTL). 89–91 (NME) contacts substrate. Position 102 (histidine 102) interacts with Zn(2+). Glutamate 104 acts as the Proton donor in catalysis. Zn(2+)-binding residues include cysteine 129 and cysteine 132.

This sequence belongs to the cytidine and deoxycytidylate deaminase family. In terms of assembly, homodimer. Requires Zn(2+) as cofactor.

It catalyses the reaction cytidine + H2O + H(+) = uridine + NH4(+). The enzyme catalyses 2'-deoxycytidine + H2O + H(+) = 2'-deoxyuridine + NH4(+). Functionally, this enzyme scavenges exogenous and endogenous cytidine and 2'-deoxycytidine for UMP synthesis. The chain is Cytidine deaminase from Proteus mirabilis (strain HI4320).